Consider the following 76-residue polypeptide: Sulfur carrier protein TusA (76 aa).

Cys14 functions as the Cysteine persulfide intermediate in the catalytic mechanism.

This sequence belongs to the sulfur carrier protein TusA family. As to quaternary structure, interacts with IscS.

The protein resides in the cytoplasm. It participates in tRNA modification. In terms of biological role, sulfur carrier protein involved in sulfur trafficking in the cell. Part of a sulfur-relay system required for 2-thiolation during synthesis of 2-thiouridine of the modified wobble base 5-methylaminomethyl-2-thiouridine (mnm(5)s(2)U) in tRNA. Interacts with IscS and stimulates its cysteine desulfurase activity. Accepts an activated sulfur from IscS, which is then transferred to TusD, and thus determines the direction of sulfur flow from IscS to 2-thiouridine formation. Also appears to be involved in sulfur transfer for the biosynthesis of molybdopterin. In Buchnera aphidicola subsp. Acyrthosiphon pisum (strain 5A), this protein is Sulfur carrier protein TusA.